We begin with the raw amino-acid sequence, 412 residues long: Protein Mb3436c (412 aa).

The residue at position 227 (lysine 227) is an N6-(pyridoxal phosphate)lysine.

This sequence belongs to the DegT/DnrJ/EryC1 family.

The protein is Protein Mb3436c of Mycobacterium bovis (strain ATCC BAA-935 / AF2122/97).